A 236-amino-acid polypeptide reads, in one-letter code: Increased recombination centers protein 22-2 (236 aa).

The N-terminal stretch at 1–19 (MKFSAILTALTATIATVAG) is a signal peptide. The Lumenal portion of the chain corresponds to 20–161 (YETSGKPHTV…AAVSFFDPRL (142 aa)). The chain crosses the membrane as a helical span at residues 162-182 (IFLELVLLATFGGIAYFVYEI). Topologically, residues 183–236 (WGKQYLRGTAPVKVPVKKSGSPVAVKEASPVGSASGFDESWIPEAHLKKNKKKA) are cytoplasmic.

Belongs to the IRC22 family.

The protein localises to the endoplasmic reticulum membrane. Its function is as follows. Is probably involved in a pathway contributing to genomic integrity. The chain is Increased recombination centers protein 22-2 (IRC22-2) from Candida tropicalis (strain ATCC MYA-3404 / T1) (Yeast).